Here is a 351-residue protein sequence, read N- to C-terminus: Dihydroorotate dehydrogenase (quinone) (351 aa).

Residues 61 to 65 (AGLDK) and threonine 85 contribute to the FMN site. A substrate-binding site is contributed by lysine 65. 110–114 (NRMGF) is a binding site for substrate. FMN is bound by residues asparagine 139 and asparagine 172. Asparagine 172 contributes to the substrate binding site. The active-site Nucleophile is the serine 175. Asparagine 177 lines the substrate pocket. Residues lysine 217 and threonine 245 each contribute to the FMN site. 246–247 (NT) serves as a coordination point for substrate. FMN is bound by residues glycine 268, glycine 297, and 318-319 (YT).

Belongs to the dihydroorotate dehydrogenase family. Type 2 subfamily. In terms of assembly, monomer. The cofactor is FMN.

It is found in the cell membrane. It catalyses the reaction (S)-dihydroorotate + a quinone = orotate + a quinol. The protein operates within pyrimidine metabolism; UMP biosynthesis via de novo pathway; orotate from (S)-dihydroorotate (quinone route): step 1/1. Catalyzes the conversion of dihydroorotate to orotate with quinone as electron acceptor. This chain is Dihydroorotate dehydrogenase (quinone), found in Xylella fastidiosa (strain 9a5c).